Consider the following 365-residue polypeptide: Phosphatidylcholine:ceramide cholinephosphotransferase 4 (365 aa).

Topologically, residues M1–Q44 are cytoplasmic. Residues V45 to I65 traverse the membrane as a helical segment. Residues T66–G92 lie on the Lumenal side of the membrane. The helical transmembrane segment at M93–F113 threads the bilayer. The Cytoplasmic segment spans residues K114–R165. The helical transmembrane segment at F166–L186 threads the bilayer. Residues P187 to T229 lie on the Lumenal side of the membrane. H228 is an active-site residue. Residues V230–F250 form a helical membrane-spanning segment. Position 251 (R251) is a topological domain, cytoplasmic. The chain crosses the membrane as a helical span at residues P252–Y272. Active-site residues include H271 and D275. Residues T273–D275 lie on the Lumenal side of the membrane. A helical transmembrane segment spans residues V276 to G296. Over A297–V365 the chain is Cytoplasmic.

This sequence belongs to the sphingomyelin synthase family.

It is found in the golgi apparatus membrane. It carries out the reaction an N-acylsphing-4-enine + a 1,2-diacyl-sn-glycero-3-phosphocholine = a sphingomyelin + a 1,2-diacyl-sn-glycerol. Bidirectional lipid cholinephosphotransferase capable of converting phosphatidylcholine (PC) and ceramide to sphingomyelin (SM) and diacylglycerol (DAG) and vice versa. Direction is dependent on the relative concentrations of DAG and ceramide as phosphocholine acceptors. Directly and specifically recognizes the choline head group on the substrate. Also requires two fatty chains on the choline-P donor molecule in order to be recognized efficiently as a substrate. Does not function strictly as a SM synthase. Essential for viability of the pathogenic bloodstream stage of this human protozoan parasite and, consequently, can be considered as potential drug target. This Trypanosoma brucei brucei (strain 927/4 GUTat10.1) protein is Phosphatidylcholine:ceramide cholinephosphotransferase 4.